A 579-amino-acid polypeptide reads, in one-letter code: Deleted in azoospermia protein 4 (579 aa).

Residues 1–10 show a composition bias toward polar residues; sequence MSAANPETPN. The segment at 1–27 is disordered; that stretch reads MSAANPETPNSTISREASTQSSSAAAS. Positions 11 to 27 are enriched in low complexity; sequence STISREASTQSSSAAAS. The 76-residue stretch at 40–115 folds into the RRM 1 domain; sequence NTVFVGGIDA…KKLKLGPAIR (76 aa). Polar residues predominate over residues 163–175; the sequence is QHVQSAANPETPN. Positions 163–192 are disordered; that stretch reads QHVQSAANPETPNSTISREASTQSSSAAAS. Residues 176-192 show a composition bias toward low complexity; that stretch reads STISREASTQSSSAAAS. Residues 205-280 enclose the RRM 2 domain; sequence NTVFVGGIDA…KKLKLGPAIR (76 aa). DAZ domains are found at residues 332 to 355, 356 to 379, 380 to 403, 404 to 427, 428 to 451, 452 to 475, 476 to 499, 500 to 523, and 524 to 547; these read AYSA…YNYQ, EYPT…YNYQ, PFPA…YNYQ, and AFPA…YNYQ.

The protein belongs to the RRM DAZ family. Forms a heterodimer with BOLL and DAZL. Interacts with PUM2, DAZAP1, DAZAP2, DZIP1 and DZIP3. Testis-specific. Expression restricted to premeiotic germ cells, particularly in spermatogonia (at protein level).

The protein resides in the cytoplasm. It localises to the nucleus. RNA-binding protein that plays an essential role in spermatogenesis. May act by binding to the 3'-UTR of mRNAs and regulating their translation. The sequence is that of Deleted in azoospermia protein 4 (DAZ4) from Homo sapiens (Human).